The primary structure comprises 984 residues: Putative formate dehydrogenase SAUSA300_2258 (984 aa).

The 2Fe-2S ferredoxin-type domain occupies 3–79; the sequence is EHLVVTLDGK…PMTVNTVNND (77 aa). C37, C48, C51, and C63 together coordinate [2Fe-2S] cluster. Residues 79 to 119 enclose the 4Fe-4S His(Cys)3-ligated-type domain; the sequence is DVKDAQKEALDRILEKHMLYCTVCDYNNGDCEIHNTMDAWG. The [4Fe-4S] cluster site is built by H95, C99, C102, C109, C147, C150, C153, C157, C190, C193, C196, C200, C264, C267, C271, and C299. 4Fe-4S ferredoxin-type domains follow at residues 138–165 and 181–211; these read PFYR…VNET and NDVP…VNME. The segment at 252-984 is formate dehydrogenase; sequence MRKERIKKTK…YVFPGNQVDK (733 aa). A 4Fe-4S Mo/W bis-MGD-type domain is found at 257–313; that stretch reads IKKTKTVCTYCGVGCSFEVWTKDREILKVQPSHDSPANKIATCVKGKFSWGHINSDQ.

This sequence in the C-terminal section; belongs to the prokaryotic molybdopterin-containing oxidoreductase family. It depends on [2Fe-2S] cluster as a cofactor. [4Fe-4S] cluster serves as cofactor. Mo-bis(molybdopterin guanine dinucleotide) is required as a cofactor.

The catalysed reaction is formate + NAD(+) = CO2 + NADH. The polypeptide is Putative formate dehydrogenase SAUSA300_2258 (Staphylococcus aureus (strain USA300)).